We begin with the raw amino-acid sequence, 215 residues long: Putative O-methyltransferase MAB_1361c (215 aa).

S-adenosyl-L-methionine-binding positions include valine 42, glutamate 64, 66–67 (GT), serine 72, aspartate 90, and valine 91. Position 138 (aspartate 138) interacts with substrate.

The protein belongs to the class I-like SAM-binding methyltransferase superfamily. Cation-dependent O-methyltransferase family.

The chain is Putative O-methyltransferase MAB_1361c from Mycobacteroides abscessus (strain ATCC 19977 / DSM 44196 / CCUG 20993 / CIP 104536 / JCM 13569 / NCTC 13031 / TMC 1543 / L948) (Mycobacterium abscessus).